Reading from the N-terminus, the 249-residue chain is Probable transcriptional regulatory protein IL1088 (249 aa).

The protein belongs to the TACO1 family.

It localises to the cytoplasm. The protein is Probable transcriptional regulatory protein IL1088 of Idiomarina loihiensis (strain ATCC BAA-735 / DSM 15497 / L2-TR).